The following is a 541-amino-acid chain: Plasminogen-binding protein PgbB (541 aa).

Basic and acidic residues-rich tracts occupy residues 420–434 (HKAKENKQPLEENKV) and 446–455 (VKTRRPEPTK). Residues 420–541 (HKAKENKQPL…RRKALEMNKK (122 aa)) are disordered. Positions 456-476 (DQNNAIQQGETKNNESKNTPI) are enriched in polar residues. Over residues 480-541 (NAAKKEAPKP…RRKALEMNKK (62 aa)) the composition is skewed to basic and acidic residues.

The protein resides in the cell surface. In terms of biological role, binds plasminogen, specifically, and in a concentration and lysine-dependent manner. Plasminogen is the precursor of plasmin, a serine protease that cleaves fibrin, fibronectin, laminin and vitronectin. Acquisition of plasminogen/plasmin could enable H.pylori to degrade host components. The sequence is that of Plasminogen-binding protein PgbB (pgbB) from Helicobacter pylori (strain J99 / ATCC 700824) (Campylobacter pylori J99).